The sequence spans 183 residues: Ribosome-recycling factor (183 aa).

It belongs to the RRF family.

The protein resides in the cytoplasm. Responsible for the release of ribosomes from messenger RNA at the termination of protein biosynthesis. May increase the efficiency of translation by recycling ribosomes from one round of translation to another. The sequence is that of Ribosome-recycling factor from Bifidobacterium longum (strain DJO10A).